A 1105-amino-acid polypeptide reads, in one-letter code: ATP-dependent DNA helicase MPH1 (1105 aa).

In terms of domain architecture, Helicase ATP-binding spans 94-261; the sequence is IVQRAFYDNL…EIIDNLSISK (168 aa). ATP is bound at residue 107-114; that stretch reads LPTGLGKT. The short motif at 209-212 is the DEAH box element; the sequence is DEAH. One can recognise a Helicase C-terminal domain in the interval 468–641; it reads SIERIGSNLR…LITLAQSNRI (174 aa). Disordered regions lie at residues 493 to 534, 684 to 708, 758 to 824, 850 to 880, and 918 to 953; these read EEAY…AQIK, KGKK…EKRF, IQSK…PKLG, LVTG…ECAP, and VSDD…FDEG. Basic residues predominate over residues 499–511; it reads KGKKGRTKGKATK. A compositionally biased stretch (basic and acidic residues) spans 518–532; sequence TPERSTSRTSSEDAQ. Residues 684-705 are compositionally biased toward basic residues; the sequence is KGKKVTKSKSKSKSNSKSKKIE. The segment covering 764–787 has biased composition (basic and acidic residues); it reads PVKENQSKRPNSEHICEEDSRQET. Positions 788–799 are enriched in low complexity; that stretch reads ENNSNESNGSFE. Residues 927–943 are compositionally biased toward polar residues; that stretch reads DSINNQQLHKNKNLGST. A compositionally biased stretch (acidic residues) spans 944 to 953; that stretch reads SDDDDAFDEG.

Belongs to the DEAD box helicase family. DEAH subfamily. FANCM sub-subfamily. Interacts with the MHF histone-fold complex to form the FANCM-MHF complex.

The protein resides in the nucleus. It catalyses the reaction ATP + H2O = ADP + phosphate + H(+). ATP-dependent DNA helicase involved in DNA damage repair by homologous recombination and in genome maintenance. Capable of unwinding D-loops. Plays a role in limiting crossover recombinants during mitotic DNA double-strand break (DSB) repair. Component of a FANCM-MHF complex which promotes gene conversion at blocked replication forks, probably by reversal of the stalled fork. This is ATP-dependent DNA helicase MPH1 from Debaryomyces hansenii (strain ATCC 36239 / CBS 767 / BCRC 21394 / JCM 1990 / NBRC 0083 / IGC 2968) (Yeast).